Reading from the N-terminus, the 157-residue chain is Probable intracellular pathogenesis-related protein T1 (157 aa).

N79 and N117 each carry an N-linked (GlcNAc...) asparagine glycan.

It belongs to the BetVI family.

In Catharanthus roseus (Madagascar periwinkle), this protein is Probable intracellular pathogenesis-related protein T1 (PCKR3).